A 290-amino-acid chain; its full sequence is Ribosomal RNA small subunit methyltransferase A (290 aa).

Residues N27, L29, G54, E75, D100, and N125 each coordinate S-adenosyl-L-methionine.

This sequence belongs to the class I-like SAM-binding methyltransferase superfamily. rRNA adenine N(6)-methyltransferase family. RsmA subfamily.

It is found in the cytoplasm. It catalyses the reaction adenosine(1518)/adenosine(1519) in 16S rRNA + 4 S-adenosyl-L-methionine = N(6)-dimethyladenosine(1518)/N(6)-dimethyladenosine(1519) in 16S rRNA + 4 S-adenosyl-L-homocysteine + 4 H(+). Specifically dimethylates two adjacent adenosines (A1518 and A1519) in the loop of a conserved hairpin near the 3'-end of 16S rRNA in the 30S particle. May play a critical role in biogenesis of 30S subunits. This Streptococcus pneumoniae (strain JJA) protein is Ribosomal RNA small subunit methyltransferase A.